We begin with the raw amino-acid sequence, 513 residues long: ATP synthase subunit alpha (513 aa).

Residue 169-176 (GDRQTGKT) coordinates ATP.

The protein belongs to the ATPase alpha/beta chains family. F-type ATPases have 2 components, CF(1) - the catalytic core - and CF(0) - the membrane proton channel. CF(1) has five subunits: alpha(3), beta(3), gamma(1), delta(1), epsilon(1). CF(0) has three main subunits: a(1), b(2) and c(9-12). The alpha and beta chains form an alternating ring which encloses part of the gamma chain. CF(1) is attached to CF(0) by a central stalk formed by the gamma and epsilon chains, while a peripheral stalk is formed by the delta and b chains.

The protein localises to the cell inner membrane. It catalyses the reaction ATP + H2O + 4 H(+)(in) = ADP + phosphate + 5 H(+)(out). Functionally, produces ATP from ADP in the presence of a proton gradient across the membrane. The alpha chain is a regulatory subunit. The polypeptide is ATP synthase subunit alpha (Nitrosomonas europaea (strain ATCC 19718 / CIP 103999 / KCTC 2705 / NBRC 14298)).